The sequence spans 271 residues: Pyridoxine kinase (271 aa).

N141 lines the ATP pocket. Mg(2+) is bound at residue E144. ATP-binding positions include T178–K182, D190, I206, G215, and K240.

This sequence belongs to the ThiD family. Homodimer.

The catalysed reaction is pyridoxal + ATP = pyridoxal 5'-phosphate + ADP + H(+). Phosphorylates B6 vitamers; functions in a salvage pathway. Uses pyridoxal, pyridoxine, and pyridoxamine as substrates. Can also use hydroxymethylpyrimidine (HMP) as substrate. This is Pyridoxine kinase (pdxK) from Bacillus subtilis (strain 168).